The sequence spans 556 residues: (6-4)DNA photolyase (556 aa).

The 139-residue stretch at 24 to 162 (SGSLIWFRKG…EVFSPVSHTL (139 aa)) folds into the Photolyase/cryptochrome alpha/beta domain. A phosphate-binding site is contributed by Glu-262. FAD-binding positions include Lys-263, 276–280 (TTVMS), 317–321 (QLLWR), 380–383 (WMHH), Arg-386, 415–417 (DSD), and Asn-421. Residue Trp-320 participates in DNA binding. The interaction with DNA stretch occupies residues 382–387 (HHLARH). Trp-427 contacts DNA. The segment at 534-556 (LRRKLQKDEHEESKIRNQRPKLK) is disordered. Basic and acidic residues predominate over residues 539-548 (QKDEHEESKI).

The protein belongs to the DNA photolyase class-1 family. Requires FAD as cofactor. In terms of tissue distribution, expressed in siliques, flowers and leaves. Not detected in roots.

It catalyses the reaction (6-4) photoproduct (in DNA) = 2 pyrimidine residues (in DNA).. In terms of biological role, involved in repair of UV radiation-induced DNA damage. Catalyzes the photoreactivation of pyrimidine [6-4] pyrimidone photoproduct (6-4 products). Binds specifically to DNA containing 6-4 products and repairs these lesions in a visible light-dependent manner. Not required for repair of cyclobutane pyrimidine dimer (CPD). This Arabidopsis thaliana (Mouse-ear cress) protein is (6-4)DNA photolyase (UVR3).